The following is a 314-amino-acid chain: Formate-nitrite transporter (314 aa).

The Cytoplasmic segment spans residues 1–47 (MSKGKSKYVIDPISVKTACTSEESYIRCVEYGKGKAHYPNLSLLAKA). A helical transmembrane segment spans residues 48–68 (ILAGVFVGVCAHASGIAGGHF). Residues 69 to 78 (YYHKLREYVG) lie on the Extracellular side of the membrane. A helical transmembrane segment spans residues 79 to 99 (ISMSAFVYGFTFPIAFLCIIA). The Cytoplasmic portion of the chain corresponds to 100-128 (TGSDLFTGNTLAVTTALLQRKVSLLQYLR). The chain crosses the membrane as a helical span at residues 129–149 (VMSISLFGNYLGAVSFAFFVS). Residues 150-185 (HLSGAYEKHTDVTKNHIFQFLNDIAEKKISHTFIQC) are Extracellular-facing. A helical transmembrane segment spans residues 186–206 (ICLAIGCNIFVCLAVYFVLTI). The Cytoplasmic portion of the chain corresponds to 207 to 211 (KDGSG). Residues 212-232 (MVFSVFFAVYAFAIAGYEHII) traverse the membrane as a helical segment. Residues 233–257 (ANMYTLNLALMVEAKVTWSKVYFHN) lie on the Extracellular side of the membrane. Residues 258-278 (LLPTLIGNYIAGALVLACPLF) form a helical membrane-spanning segment. Over 279 to 314 (YIYRNSYRDYERTRGDGSNCGLRSLSIEMQNGSNGN) the chain is Cytoplasmic.

It belongs to the FNT transporter (TC 1.A.16) family. Homopentamer.

The protein localises to the cell membrane. It localises to the vacuole membrane. It carries out the reaction (S)-lactate(in) + H(+)(in) = (S)-lactate(out) + H(+)(out). The catalysed reaction is formate(in) + H(+)(in) = formate(out) + H(+)(out). The enzyme catalyses pyruvate(out) + H(+)(out) = pyruvate(in) + H(+)(in). It catalyses the reaction acetate(out) + H(+)(out) = acetate(in) + H(+)(in). With respect to regulation, inhibited by the Malaria Box compound MMV007839 and its derivatives BH296 and BH267.meta. In terms of biological role, monocarboxylate-proton symporter that mediates the efflux of the waste product lactate in the intraerythrocytic parasites; active in acidic-to-neutral pH range. Transports L-lactate. The polypeptide is Formate-nitrite transporter (Plasmodium knowlesi (strain H)).